The following is a 63-amino-acid chain: Conotoxin Gm5.1 (63 aa).

Positions 1–21 (MRYLPVFVILLLLIASIPSDT) are cleaved as a signal peptide. A propeptide spanning residues 22–50 (VQLKTKDDMPLASFHGNGRRILRMLSNKR) is cleaved from the precursor.

Belongs to the conotoxin T superfamily. Post-translationally, contains 2 disulfide bonds that can be either 'C1-C3, C2-C4' or 'C1-C4, C2-C3', since these disulfide connectivities have been observed for conotoxins with cysteine framework V (for examples, see AC P0DQQ7 and AC P81755). Expressed by the venom duct.

Its subcellular location is the secreted. In Conus gloriamaris (Glory-of-the-Sea cone), this protein is Conotoxin Gm5.1.